The chain runs to 346 residues: Phosphoribosylformylglycinamidine cyclo-ligase (346 aa).

The protein belongs to the AIR synthase family.

The protein localises to the cytoplasm. The catalysed reaction is 2-formamido-N(1)-(5-O-phospho-beta-D-ribosyl)acetamidine + ATP = 5-amino-1-(5-phospho-beta-D-ribosyl)imidazole + ADP + phosphate + H(+). It functions in the pathway purine metabolism; IMP biosynthesis via de novo pathway; 5-amino-1-(5-phospho-D-ribosyl)imidazole from N(2)-formyl-N(1)-(5-phospho-D-ribosyl)glycinamide: step 2/2. This is Phosphoribosylformylglycinamidine cyclo-ligase from Bacillus mycoides (strain KBAB4) (Bacillus weihenstephanensis).